Consider the following 121-residue polypeptide: Holin-like protein CidA (121 aa).

Helical transmembrane passes span 27-47 (VHLP…SLKF), 58-78 (GADF…VAVI), and 89-109 (IDLI…TGIL).

Belongs to the CidA/LrgA family. CidA subfamily.

Its subcellular location is the cell membrane. In terms of biological role, increases the activity of extracellular murein hydrolases possibly by mediating their export via hole formation. Inhibited by the antiholin-like proteins LrgAB. In an unstressed cell, the LrgAB products probably inhibit the function of the CidA protein. When a cell is stressed by the addition of antibiotics or by other factors in the environment, CidA possibly oligomerizes within the bacterial cell membrane, creating lesions that disrupt the proton motive force, which in turn results in loss of cell viability. These lesions are also hypothesized to regulate the subsequent cell lysis by either allowing the murein hydrolases access to the cell wall substrate and/or regulating their activity by a possible change in the cell wall pH that results from loss of membrane potential. This chain is Holin-like protein CidA, found in Bacillus cytotoxicus (strain DSM 22905 / CIP 110041 / 391-98 / NVH 391-98).